The chain runs to 82 residues: Putative defensin-like protein 70 (82 aa).

The signal sequence occupies residues 1-27; sequence MKMESSKMLVVFTLMVLIAVSSDLVSG. Cystine bridges form between Cys39–Cys80, Cys43–Cys66, Cys52–Cys78, and Cys56–Cys79.

This sequence belongs to the DEFL family.

It is found in the secreted. This Arabidopsis thaliana (Mouse-ear cress) protein is Putative defensin-like protein 70 (LCR83).